The following is a 914-amino-acid chain: Solute carrier family 12 member 9 (914 aa).

Topologically, residues 1-36 are cytoplasmic; that stretch reads MASESSPLLAYRLLGEEGAAFPPNGAGVSGVPSSRK. Ser-6 is subject to Phosphoserine. A helical membrane pass occupies residues 37 to 57; sequence LSTFLGVVVPTVLSMFSIVVF. Topologically, residues 58-72 are extracellular; the sequence is LRIGFVVGHAGLLQA. The chain crosses the membrane as a helical span at residues 73–93; the sequence is LAMLLVAYIILALTVLSVCAI. Residues 94 to 119 lie on the Cytoplasmic side of the membrane; the sequence is ATNGAVRGGGAYFMISRTLGPEVGGS. The helical transmembrane segment at 120-140 threads the bilayer; sequence IGLMFYLANVCGCAVSLLGLV. Residues 141–167 lie on the Extracellular side of the membrane; it reads ESILDVFGADATGSSGIQVLPQGYGWN. A helical membrane pass occupies residues 168 to 188; that stretch reads LLYGSLLLGLVGGVCTLGAGL. Residues 189–193 lie on the Cytoplasmic side of the membrane; that stretch reads YARAS. The chain crosses the membrane as a helical span at residues 194-214; sequence FLTFLLVSGSLASVLVSFVAV. Over 215 to 262 the chain is Extracellular; that stretch reads GPRNIPLAPRPGTNASSVPHRHGHFTGFNGSTLRDNLGAGYAEDYTTG. N-linked (GlcNAc...) asparagine glycans are attached at residues Asn-228 and Asn-243. A helical membrane pass occupies residues 263–283; the sequence is AMMTFASVFAVLFNGCTGIMA. Over 284–297 the chain is Cytoplasmic; that stretch reads GANMSGELKDPSRA. The helical transmembrane segment at 298–318 threads the bilayer; that stretch reads IPLGTIIAVAYTFFIYILLFF. The Extracellular segment spans residues 319 to 338; it reads LSSFTCDRALLQEDYGFFRD. A helical membrane pass occupies residues 339-359; it reads ISLWPPLVLIGIYATALSASM. Topologically, residues 360-376 are cytoplasmic; sequence SSLIGASRILHALAQDD. A helical membrane pass occupies residues 377–399; it reads LFGVILAPAKVVSGGGNPWGAVL. The Extracellular segment spans residues 400–416; the sequence is YSWGLVQLVLLAGKLNT. The chain crosses the membrane as a helical span at residues 417–437; the sequence is LAAVVTVFYLVAYAAVDLSCL. Residues 438–466 are Cytoplasmic-facing; sequence SLEWASAPNFRPTFSLFSWHTCLLGVASC. A helical membrane pass occupies residues 467–487; sequence LLMMFLISPGAAGGSLLLMGL. The Extracellular portion of the chain corresponds to 488-740; that stretch reads LSALLTARGG…LLRPRGGPGY (253 aa). Residues 645 to 678 form a disordered region; it reads PAFSEPAEGTREGGSPALSTLFPPPRAPGSPRAL. Residues 741 to 761 form a helical membrane-spanning segment; the sequence is VDVCGLFLLQMATILSMVPAW. The Cytoplasmic segment spans residues 762-914; it reads HSARLRIFLC…GVTPVTCTDL (153 aa). Residues 844 to 864 are disordered; it reads QGRGTVGGPGGPEGRDGEEGP.

This sequence belongs to the SLC12A transporter family. Interacts with SLC12A1.

It is found in the cell membrane. Its subcellular location is the lysosome membrane. May be an inhibitor of SLC12A1. Seems to correspond to a subunit of a multimeric transport system and thus, additional subunits may be required for its function. May play a role in lysosomal ion flux and osmoregulation. The sequence is that of Solute carrier family 12 member 9 (Slc12a9) from Mus musculus (Mouse).